Here is a 411-residue protein sequence, read N- to C-terminus: MKYAEKSPALWDAIRQEEKRQQNTIELIASENIVSDAVREAQGSVLTNKYAEGYPGRRYYGGCQYIDQVEQLAIDYAKKLFNAKFANVQPHSGSQANMAVYQALLKPGDVILGMGMDAGGHLTHGAKVNFSGKEYKSYEYGLNVETEELDFDQIRKVALEVKPKLIVAGASAYSRIIDWQKFRDIADEVGAYLMVDMAHIAGLVATDQHPSPIPVADIVTTTTHKTLRGPRGGMILSNNLEIGKKINSALFPGIQGGPLEHVIAGKAQAFYEDLQPQFTDYIKQVVKNAKAMAEVFDESENIRVVSGGTDNHLMIIDITDTGLTGKDAQNLLDFVNITTNKESIPGDKRSPFITSGLRIGTPAITSRGFNEEDARKTASLIIEILSDPDNEATIEHVKKEVHELTKKHPVE.

(6S)-5,6,7,8-tetrahydrofolate is bound at residue 120–122 (GHL). At lysine 225 the chain carries N6-(pyridoxal phosphate)lysine. 350 to 352 (SPF) provides a ligand contact to (6S)-5,6,7,8-tetrahydrofolate.

The protein belongs to the SHMT family. In terms of assembly, homodimer. Requires pyridoxal 5'-phosphate as cofactor.

Its subcellular location is the cytoplasm. It carries out the reaction (6R)-5,10-methylene-5,6,7,8-tetrahydrofolate + glycine + H2O = (6S)-5,6,7,8-tetrahydrofolate + L-serine. Its pathway is one-carbon metabolism; tetrahydrofolate interconversion. The protein operates within amino-acid biosynthesis; glycine biosynthesis; glycine from L-serine: step 1/1. In terms of biological role, catalyzes the reversible interconversion of serine and glycine with tetrahydrofolate (THF) serving as the one-carbon carrier. This reaction serves as the major source of one-carbon groups required for the biosynthesis of purines, thymidylate, methionine, and other important biomolecules. Also exhibits THF-independent aldolase activity toward beta-hydroxyamino acids, producing glycine and aldehydes, via a retro-aldol mechanism. The protein is Serine hydroxymethyltransferase of Lactobacillus acidophilus (strain ATCC 700396 / NCK56 / N2 / NCFM).